Consider the following 172-residue polypeptide: Co-chaperone protein HscB (172 aa).

One can recognise a J domain in the interval aspartate 2–leucine 74.

It belongs to the HscB family. In terms of assembly, interacts with HscA and stimulates its ATPase activity. Interacts with IscU.

Co-chaperone involved in the maturation of iron-sulfur cluster-containing proteins. Seems to help targeting proteins to be folded toward HscA. This Pectobacterium atrosepticum (strain SCRI 1043 / ATCC BAA-672) (Erwinia carotovora subsp. atroseptica) protein is Co-chaperone protein HscB.